A 511-amino-acid polypeptide reads, in one-letter code: NAD(P)H-quinone oxidoreductase subunit 2, chloroplastic (511 aa).

14 helical membrane-spanning segments follow: residues 15–35 (LLPE…DLTF), 39–59 (VLSW…VVLL), 78–98 (SLSI…ILLS), 108–128 (ALTE…LLSG), 132–152 (LIMI…LTGY), 167–187 (LLIG…LYGL), 210–230 (FASW…VAAA), 244–264 (PTPV…ALAT), 278–298 (WHLL…LIAI), 306–326 (MLGY…IAGN), 334–354 (LVYM…IILF), 377–397 (VFCF…AGFF), 410–430 (GFYI…YYYL), and 466–486 (LGIG…NPII).

Belongs to the complex I subunit 2 family. As to quaternary structure, NDH is composed of at least 16 different subunits, 5 of which are encoded in the nucleus.

It is found in the plastid. The protein resides in the chloroplast thylakoid membrane. The catalysed reaction is a plastoquinone + NADH + (n+1) H(+)(in) = a plastoquinol + NAD(+) + n H(+)(out). The enzyme catalyses a plastoquinone + NADPH + (n+1) H(+)(in) = a plastoquinol + NADP(+) + n H(+)(out). In terms of biological role, NDH shuttles electrons from NAD(P)H:plastoquinone, via FMN and iron-sulfur (Fe-S) centers, to quinones in the photosynthetic chain and possibly in a chloroplast respiratory chain. The immediate electron acceptor for the enzyme in this species is believed to be plastoquinone. Couples the redox reaction to proton translocation, and thus conserves the redox energy in a proton gradient. The chain is NAD(P)H-quinone oxidoreductase subunit 2, chloroplastic from Chlorokybus atmophyticus (Soil alga).